Reading from the N-terminus, the 172-residue chain is Adenine phosphoribosyltransferase (172 aa).

The protein belongs to the purine/pyrimidine phosphoribosyltransferase family. In terms of assembly, homodimer.

Its subcellular location is the cytoplasm. The enzyme catalyses AMP + diphosphate = 5-phospho-alpha-D-ribose 1-diphosphate + adenine. The protein operates within purine metabolism; AMP biosynthesis via salvage pathway; AMP from adenine: step 1/1. In terms of biological role, catalyzes a salvage reaction resulting in the formation of AMP, that is energically less costly than de novo synthesis. This is Adenine phosphoribosyltransferase from Clostridium beijerinckii (strain ATCC 51743 / NCIMB 8052) (Clostridium acetobutylicum).